A 715-amino-acid polypeptide reads, in one-letter code: ATP-dependent DNA helicase Hel308 (715 aa).

ATP contacts are provided by residues Q35 and 53–60 (SPTGSGKT). In terms of domain architecture, Helicase ATP-binding spans 40–203 (KKGLLDGNRL…WLGAEPVATN (164 aa)). The DEAH box motif lies at 152–155 (DELH). Residues 236 to 442 (HGDDAIIAYT…ERAFYTFLLG (207 aa)) enclose the Helicase C-terminal domain.

It belongs to the helicase family. Hel308 subfamily. Monomer. Interacts with PINA ATPase which decreases both DNA helicase activities of this protein.

The catalysed reaction is Couples ATP hydrolysis with the unwinding of duplex DNA by translocating in the 3'-5' direction.. It carries out the reaction ATP + H2O = ADP + phosphate + H(+). The enzyme catalyses Couples ATP hydrolysis with the unwinding of duplex DNA at the replication fork by translocating in the 5'-3' direction. This creates two antiparallel DNA single strands (ssDNA). The leading ssDNA polymer is the template for DNA polymerase III holoenzyme which synthesizes a continuous strand.. PINA inhibits the (weak) 5'-3' but not the 3'-5' helicase activity of this protein on overhang substrates. DNA-dependent ATPase and 3'-5' DNA helicase that may be involved in repair of stalled replication forks. In terms of biological role, has predominantly 3'-5' helicase activity but also a weak 5'-3' helicase activity. Has the ability to unwind replication forks, preferentially removing the lagging strand. Hjc, Hjm (Hel308) and branch migration ATPase PINA coordinate HJ migration and cleavage of replication forks in a coordinated way. In Saccharolobus islandicus (strain REY15A) (Sulfolobus islandicus), this protein is ATP-dependent DNA helicase Hel308.